Here is a 340-residue protein sequence, read N- to C-terminus: Anthranilate phosphoribosyltransferase (340 aa).

Residues G79, 82–83 (GD), S87, 89–92 (NIST), 107–115 (KHGNRSVSS), and S119 each bind 5-phospho-alpha-D-ribose 1-diphosphate. G79 contacts anthranilate. S91 is a Mg(2+) binding site. N110 contributes to the anthranilate binding site. R165 contacts anthranilate. Mg(2+)-binding residues include D224 and E225.

The protein belongs to the anthranilate phosphoribosyltransferase family. As to quaternary structure, homodimer. Mg(2+) serves as cofactor.

It catalyses the reaction N-(5-phospho-beta-D-ribosyl)anthranilate + diphosphate = 5-phospho-alpha-D-ribose 1-diphosphate + anthranilate. It participates in amino-acid biosynthesis; L-tryptophan biosynthesis; L-tryptophan from chorismate: step 2/5. Functionally, catalyzes the transfer of the phosphoribosyl group of 5-phosphorylribose-1-pyrophosphate (PRPP) to anthranilate to yield N-(5'-phosphoribosyl)-anthranilate (PRA). This is Anthranilate phosphoribosyltransferase from Oceanobacillus iheyensis (strain DSM 14371 / CIP 107618 / JCM 11309 / KCTC 3954 / HTE831).